A 33-amino-acid chain; its full sequence is Lysozyme C, spleen isozyme (33 aa).

Belongs to the glycosyl hydrolase 22 family. In terms of assembly, monomer.

The catalysed reaction is Hydrolysis of (1-&gt;4)-beta-linkages between N-acetylmuramic acid and N-acetyl-D-glucosamine residues in a peptidoglycan and between N-acetyl-D-glucosamine residues in chitodextrins.. Its function is as follows. Lysozymes have primarily a bacteriolytic function; those in tissues and body fluids are associated with the monocyte-macrophage system and enhance the activity of immunoagents. The protein is Lysozyme C, spleen isozyme of Equus caballus (Horse).